Here is a 277-residue protein sequence, read N- to C-terminus: Cis-2,3-dihydrobiphenyl-2,3-diol dehydrogenase (277 aa).

9–33 provides a ligand contact to NAD(+); it reads LITGGASGLGRALVDRFVAERAKVA. Ser-142 contacts substrate. Residue Tyr-155 is the Proton acceptor of the active site.

This sequence belongs to the short-chain dehydrogenases/reductases (SDR) family. As to quaternary structure, homotetramer.

It catalyses the reaction (2R,3S)-3-phenylcyclohexa-3,5-diene-1,2-diol + NAD(+) = biphenyl-2,3-diol + NADH + H(+). It functions in the pathway xenobiotic degradation; biphenyl degradation; 2-hydroxy-2,4-pentadienoate and benzoate from biphenyl: step 2/4. The chain is Cis-2,3-dihydrobiphenyl-2,3-diol dehydrogenase (bphB) from Pseudomonas putida (Arthrobacter siderocapsulatus).